The chain runs to 214 residues: Redox-sensing transcriptional repressor Rex (214 aa).

The H-T-H motif DNA-binding region spans 17–56 (LYYRIFKRFYADQVEKASSKQIADAMGIDSATVRRDFSYF). 91–96 (GCGNIG) is a binding site for NAD(+).

Belongs to the transcriptional regulatory Rex family. In terms of assembly, homodimer.

The protein resides in the cytoplasm. In terms of biological role, modulates transcription in response to changes in cellular NADH/NAD(+) redox state. In Streptococcus equi subsp. zooepidemicus (strain H70), this protein is Redox-sensing transcriptional repressor Rex.